A 144-amino-acid polypeptide reads, in one-letter code: Nucleoside diphosphate kinase (144 aa).

Residues Lys5, Phe53, Arg81, Thr87, Arg98, and Asn108 each coordinate ATP. His111 acts as the Pros-phosphohistidine intermediate in catalysis.

It belongs to the NDK family. Mg(2+) is required as a cofactor.

The catalysed reaction is a 2'-deoxyribonucleoside 5'-diphosphate + ATP = a 2'-deoxyribonucleoside 5'-triphosphate + ADP. It carries out the reaction a ribonucleoside 5'-diphosphate + ATP = a ribonucleoside 5'-triphosphate + ADP. In terms of biological role, major role in the synthesis of nucleoside triphosphates other than ATP. The ATP gamma phosphate is transferred to the NDP beta phosphate via a ping-pong mechanism, using a phosphorylated active-site intermediate. The polypeptide is Nucleoside diphosphate kinase (Solanum lycopersicum (Tomato)).